Here is a 509-residue protein sequence, read N- to C-terminus: DNA primase DnaG (509 aa).

Residues 167–253 form the Toprim domain; the sequence is DAIVVVEGRA…CVEDLARHEV (87 aa). 3 residues coordinate Mg(2+): E173, D215, and D217. A disordered region spans residues 267 to 411; sequence KQAASDDADP…ASTDEQPKTL (145 aa). Composition is skewed to low complexity over residues 313–331 and 383–402; these read PVSS…ETAA and ESTA…AAGA.

The protein belongs to the archaeal DnaG primase family. As to quaternary structure, forms a ternary complex with MCM helicase and DNA. Mg(2+) serves as cofactor.

The enzyme catalyses ssDNA + n NTP = ssDNA/pppN(pN)n-1 hybrid + (n-1) diphosphate.. Its function is as follows. RNA polymerase that catalyzes the synthesis of short RNA molecules used as primers for DNA polymerase during DNA replication. This Natronomonas pharaonis (strain ATCC 35678 / DSM 2160 / CIP 103997 / JCM 8858 / NBRC 14720 / NCIMB 2260 / Gabara) (Halobacterium pharaonis) protein is DNA primase DnaG.